The following is a 133-amino-acid chain: Profilin (133 aa).

Belongs to the profilin family.

Functionally, more likely to influence phosphoinositide metabolism than actin assembly. The chain is Profilin from Camelus.